A 337-amino-acid polypeptide reads, in one-letter code: MNTEATHDQNEALTTGARLRNAREQLGLSQQAVAERLCLKVSTVRDIEEDKAPADLASTFLRGYIRSYARLVHIPEEELLPGLEKQAPLRAAKVAPMQSFSLGKRRKKRDGWLMTFTWLVLFVVIGLSGAWWWQDRKAQQEEITTMADQSSAELSSNSEQGQSVPLNTSTTTDPATTSTPPASVDTTATNTQTPAVTAPAPAVDPQQNAVVSPSQANVDTAATPAPTAATTPDGAAPLPTDQAGVTTPVADPNALVMNFTADCWLEVTDATGKKLFSGMQRKDGNLNLTGQAPYKLKIGAPAAVQIQYQGKPVDLSRFIRTNQVARLTLNAEQSPAQ.

The Cytoplasmic portion of the chain corresponds to 1–111 (MNTEATHDQN…LGKRRKKRDG (111 aa)). The HTH cro/C1-type domain occupies 19-71 (LRNAREQLGLSQQAVAERLCLKVSTVRDIEEDKAPADLASTFLRGYIRSYARL). The H-T-H motif DNA-binding region spans 30–49 (QQAVAERLCLKVSTVRDIEE). Residues 112–132 (WLMTFTWLVLFVVIGLSGAWW) traverse the membrane as a helical; Signal-anchor for type II membrane protein segment. The Periplasmic segment spans residues 133 to 337 (WQDRKAQQEE…TLNAEQSPAQ (205 aa)). The segment covering 144–167 (TTMADQSSAELSSNSEQGQSVPLN) has biased composition (polar residues). The interval 144–235 (TTMADQSSAE…PTAATTPDGA (92 aa)) is disordered. Low complexity predominate over residues 168–207 (TSTTTDPATTSTPPASVDTTATNTQTPAVTAPAPAVDPQQ). The segment covering 208–218 (NAVVSPSQANV) has biased composition (polar residues). The span at 219-235 (DTAATPAPTAATTPDGA) shows a compositional bias: low complexity.

The protein belongs to the RodZ family.

Its subcellular location is the cell inner membrane. In terms of biological role, cytoskeletal protein that is involved in cell-shape control through regulation of the length of the long axis. This chain is Cytoskeleton protein RodZ, found in Escherichia coli (strain K12 / MC4100 / BW2952).